The following is a 374-amino-acid chain: Peptide chain release factor 2 (374 aa).

Gln-254 is modified (N5-methylglutamine).

It belongs to the prokaryotic/mitochondrial release factor family. Post-translationally, methylated by PrmC. Methylation increases the termination efficiency of RF2.

The protein resides in the cytoplasm. Functionally, peptide chain release factor 2 directs the termination of translation in response to the peptide chain termination codons UGA and UAA. This is Peptide chain release factor 2 from Renibacterium salmoninarum (strain ATCC 33209 / DSM 20767 / JCM 11484 / NBRC 15589 / NCIMB 2235).